We begin with the raw amino-acid sequence, 92 residues long: Acyl carrier protein (92 aa).

The region spanning 1-84 is the Carrier domain; it reads MPSTADERQL…QIAAHLAEAV (84 aa). At Ser44 the chain carries O-(pantetheine 4'-phosphoryl)serine.

It belongs to the acyl carrier protein (ACP) family. In terms of processing, 4'-phosphopantetheine is transferred from CoA to a specific serine of apo-ACP by AcpS. This modification is essential for activity because fatty acids are bound in thioester linkage to the sulfhydryl of the prosthetic group.

Its subcellular location is the cytoplasm. It participates in lipid metabolism; fatty acid biosynthesis. Carrier of the growing fatty acid chain in fatty acid biosynthesis. This Streptomyces coelicolor (strain ATCC BAA-471 / A3(2) / M145) protein is Acyl carrier protein.